We begin with the raw amino-acid sequence, 394 residues long: tRNA-specific adenosine deaminase 1 (394 aa).

In terms of domain architecture, A to I editase spans 54–388 (SLGCGTKCIG…TKKPHELLDF (335 aa)). Histidine 78 lines the Zn(2+) pocket. Residue glutamate 80 is the Proton donor of the active site. Positions 84 and 85 each coordinate 1D-myo-inositol hexakisphosphate. The Zn(2+) site is built by cysteine 127 and cysteine 191. The 1D-myo-inositol hexakisphosphate site is built by lysine 194, arginine 197, lysine 320, lysine 357, and lysine 381.

Belongs to the ADAT1 family. It depends on 1D-myo-inositol hexakisphosphate as a cofactor. In terms of tissue distribution, widely expressed in early embryos, and later concentrates in the central nervous system.

It catalyses the reaction adenosine(37) in tRNA(Ala) + H2O + H(+) = inosine(37) in tRNA(Ala) + NH4(+). Specifically deaminates adenosine-37 to inosine in tRNA-Ala. This is tRNA-specific adenosine deaminase 1 from Drosophila melanogaster (Fruit fly).